Consider the following 92-residue polypeptide: uncharacterized protein (92 aa).

Residues 1–10 (MGLLKKKDST) show a composition bias toward basic and acidic residues. Residues 1-21 (MGLLKKKDSTSARSSTSPCAD) are disordered. Residues 16–66 (TSPCADLRNAYHNCFNKWYSEKFVKGQWDKEECVAEWKKYRDCLSENLDGK) form the CHCH domain. Short sequence motifs (cx9C motif) lie at residues 19–29 (CADLRNAYHNC) and 48–58 (CVAEWKKYRDC). Intrachain disulfides connect C19–C58 and C29–C48.

The protein belongs to the TRIAP1/MDM35 family.

This is an uncharacterized protein from Arabidopsis thaliana (Mouse-ear cress).